An 827-amino-acid polypeptide reads, in one-letter code: Penicillin-binding protein 1A (827 aa).

Over 1–18 (MGKKKKKRKSSAFKIILN) the chain is Cytoplasmic. A helical; Signal-anchor for type II membrane protein transmembrane segment spans residues 19 to 39 (VFLSIFLVAGVAFGGIVFAMI). The Extracellular portion of the chain corresponds to 40-827 (KTAPPLNVQQ…QNHEDNKNKQ (788 aa)). A transglycosylase region spans residues 57-229 (SILYDDKGQY…PSVYYPYSSA (173 aa)). The Proton donor; for transglycosylase activity role is filled by E96. A transpeptidase region spans residues 357–641 (ASAVIMDYHN…AARLWGDIMK (285 aa)). The active-site Acyl-ester intermediate; for transpeptidase activity is S398. The disordered stretch occupies residues 755–827 (GSLPPTEEKN…QNHEDNKNKQ (73 aa)). The segment covering 760–790 (TEEKNNSNTRDKNKDKNKDKDKNKNKDKNPS) has biased composition (basic and acidic residues). Residues 791–817 (QDKPNNNNNNNNNDNNNNTKPPENDSN) show a composition bias toward low complexity. Positions 818–827 (QNHEDNKNKQ) are enriched in basic and acidic residues.

It in the N-terminal section; belongs to the glycosyltransferase 51 family. The protein in the C-terminal section; belongs to the transpeptidase family.

It is found in the cell membrane. It catalyses the reaction [GlcNAc-(1-&gt;4)-Mur2Ac(oyl-L-Ala-gamma-D-Glu-L-Lys-D-Ala-D-Ala)](n)-di-trans,octa-cis-undecaprenyl diphosphate + beta-D-GlcNAc-(1-&gt;4)-Mur2Ac(oyl-L-Ala-gamma-D-Glu-L-Lys-D-Ala-D-Ala)-di-trans,octa-cis-undecaprenyl diphosphate = [GlcNAc-(1-&gt;4)-Mur2Ac(oyl-L-Ala-gamma-D-Glu-L-Lys-D-Ala-D-Ala)](n+1)-di-trans,octa-cis-undecaprenyl diphosphate + di-trans,octa-cis-undecaprenyl diphosphate + H(+). The catalysed reaction is Preferential cleavage: (Ac)2-L-Lys-D-Ala-|-D-Ala. Also transpeptidation of peptidyl-alanyl moieties that are N-acyl substituents of D-alanine.. It participates in cell wall biogenesis; peptidoglycan biosynthesis. Functionally, cell wall formation. Synthesis of cross-linked peptidoglycan from the lipid intermediates. The enzyme has a penicillin-insensitive transglycosylase N-terminal domain (formation of linear glycan strands) and a penicillin-sensitive transpeptidase C-terminal domain (cross-linking of the peptide subunits). The chain is Penicillin-binding protein 1A (pbpA) from Clostridium botulinum (strain Langeland / NCTC 10281 / Type F).